We begin with the raw amino-acid sequence, 365 residues long: Histidinol-phosphate aminotransferase (365 aa).

Lys220 is subject to N6-(pyridoxal phosphate)lysine.

It belongs to the class-II pyridoxal-phosphate-dependent aminotransferase family. Histidinol-phosphate aminotransferase subfamily. As to quaternary structure, homodimer. Pyridoxal 5'-phosphate serves as cofactor.

The catalysed reaction is L-histidinol phosphate + 2-oxoglutarate = 3-(imidazol-4-yl)-2-oxopropyl phosphate + L-glutamate. It functions in the pathway amino-acid biosynthesis; L-histidine biosynthesis; L-histidine from 5-phospho-alpha-D-ribose 1-diphosphate: step 7/9. This is Histidinol-phosphate aminotransferase from Neisseria meningitidis serogroup B (strain ATCC BAA-335 / MC58).